Here is a 547-residue protein sequence, read N- to C-terminus: Probable acetolactate synthase (547 aa).

Glu57 is a binding site for thiamine diphosphate. Residues Pro159 and Asp299–Asp318 each bind FAD. The interval Asp388–Ile468 is thiamine pyrophosphate binding. Mg(2+) contacts are provided by Asp439 and Asn466.

The protein belongs to the TPP enzyme family. Requires Mg(2+) as cofactor. Thiamine diphosphate is required as a cofactor.

It catalyses the reaction 2 pyruvate + H(+) = (2S)-2-acetolactate + CO2. The protein operates within amino-acid biosynthesis; L-isoleucine biosynthesis; L-isoleucine from 2-oxobutanoate: step 1/4. It functions in the pathway amino-acid biosynthesis; L-valine biosynthesis; L-valine from pyruvate: step 1/4. In Mycobacterium bovis (strain ATCC BAA-935 / AF2122/97), this protein is Probable acetolactate synthase (ilvG).